The sequence spans 706 residues: Transmembrane 9 superfamily member 3 (706 aa).

Residues 1 to 33 form the signal peptide; that stretch reads MRVRPKRSVITLMAIVVVMLILRNQFYSSRTRG. The Lumenal segment spans residues 34 to 290; sequence HGQEPVISSS…LSDEQSIQFH (257 aa). The chain crosses the membrane as a helical span at residues 291 to 311; that stretch reads WMSLANSVGIVLSISFITLII. At 312–371 the chain is on the cytoplasmic side; sequence YVRVMYTDKSNSKSPKYMINIEGIETEDDLDDDKYGKYSVYTVAKDWIQNGRPNLFGLKV. A helical transmembrane segment spans residues 372-392; the sequence is LILLVSFGVQFLFTIIGSLTI. Topologically, residues 393-405 are lumenal; it reads SCSMNKLHNVRNS. Residues 406–426 form a helical membrane-spanning segment; that stretch reads VLTMAILFFVLGAFMASFVGT. Topologically, residues 427 to 456 are cytoplasmic; that stretch reads RLSMVTKTKRTKANYLDDNRYLKDYKKFSP. A helical membrane pass occupies residues 457–477; the sequence is IFTILCGSSLPGIVMVSTFLL. At 478–494 the chain is on the lumenal side; it reads NSIVWAHDSTSALPFKT. Residues 495–515 form a helical membrane-spanning segment; that stretch reads IVFFMSIYFIVCIPLSLFGGI. Over 516 to 553 the chain is Cytoplasmic; it reads VANNIPLPQYWLSGITKDESNSDGNGLFVPKSRAKFNP. Residues 554-574 traverse the membrane as a helical segment; the sequence is LVYCGIYLCGIFPLLVIYVEM. Over 575 to 592 the chain is Lumenal; that stretch reads QYVYKSLWLEKTTFYYFY. Residues 593–613 form a helical membrane-spanning segment; that stretch reads GFLFLSIILLCVLTMEISIIG. The Cytoplasmic segment spans residues 614–637; the sequence is SYLLMRFCFEDKVVRNNWRWKCFE. A helical membrane pass occupies residues 638–658; sequence MGFSGGVYMELYSLYYIFAVL. The Lumenal portion of the chain corresponds to 659 to 665; sequence NIHGFSS. The chain crosses the membrane as a helical span at residues 666–686; sequence ILISICYSLIFNVMCSLGLGA. At 687–706 the chain is on the cytoplasmic side; it reads LSYLTASWFINKIYHQKVNL.

Belongs to the nonaspanin (TM9SF) (TC 9.A.2) family.

It localises to the golgi apparatus membrane. With EMP70 and TMN2, plays a critical role in the late stages of a nutrient-controlled pathway notably regulating FLO11 gene expression. Acts downstream of RAS2 and TOR. Essential for cell adhesion and filamentous growth. May play a role as effector of cellular copper homeostasis. In Saccharomyces cerevisiae (strain ATCC 204508 / S288c) (Baker's yeast), this protein is Transmembrane 9 superfamily member 3 (TMN3).